The sequence spans 337 residues: Monoacylglycerol lipase ABHD6 (337 aa).

The Extracellular segment spans residues 1 to 19 (MDLDVVNMFVIAGGTLALP). The helical; Signal-anchor for type II membrane protein transmembrane segment at 20-42 (ILAFVASFLLWPSALIRIYYWYW) threads the bilayer. Topologically, residues 43-337 (RRTLGMQVRY…HSTDNSKKLD (295 aa)) are cytoplasmic. An AB hydrolase-1 domain is found at 72-313 (PSILMLHGFS…CGHSVVMERP (242 aa)). Serine 148 functions as the Nucleophile in the catalytic mechanism. Catalysis depends on charge relay system residues aspartate 278 and histidine 306.

This sequence belongs to the AB hydrolase superfamily.

The protein localises to the late endosome membrane. It is found in the lysosome membrane. Its subcellular location is the mitochondrion membrane. It catalyses the reaction Hydrolyzes glycerol monoesters of long-chain fatty acids.. The enzyme catalyses 1-octanoylglycerol + H2O = octanoate + glycerol + H(+). It carries out the reaction 1-decanoylglycerol + H2O = decanoate + glycerol + H(+). The catalysed reaction is 1-dodecanoylglycerol + H2O = dodecanoate + glycerol + H(+). It catalyses the reaction 1-tetradecanoylglycerol + H2O = tetradecanoate + glycerol + H(+). The enzyme catalyses 2-hexadecanoylglycerol + H2O = glycerol + hexadecanoate + H(+). It carries out the reaction 2-(9Z-octadecenoyl)-glycerol + H2O = glycerol + (9Z)-octadecenoate + H(+). The catalysed reaction is 1-(9Z-octadecenoyl)-glycerol + H2O = glycerol + (9Z)-octadecenoate + H(+). It catalyses the reaction 2-(9Z,12Z-octadecadienoyl)-glycerol + H2O = (9Z,12Z)-octadecadienoate + glycerol + H(+). The enzyme catalyses 2-(5Z,8Z,11Z,14Z-eicosatetraenoyl)-glycerol + H2O = glycerol + (5Z,8Z,11Z,14Z)-eicosatetraenoate + H(+). It carries out the reaction 1-(5Z,8Z,11Z,14Z-eicosatetraenoyl)-glycerol + H2O = glycerol + (5Z,8Z,11Z,14Z)-eicosatetraenoate + H(+). The catalysed reaction is 1-(9Z,12Z-octadecadienoyl)-glycerol + H2O = (9Z,12Z)-octadecadienoate + glycerol + H(+). It catalyses the reaction 3-(9Z-octadecenoyl)-sn-glycero-1-phospho-(3'-(9Z-octadecenoyl)-1'-sn-glycerol) + H2O = 3-(9Z-octadecenoyl)-sn-glycero-1-phospho-(1'-sn-glycerol) + (9Z)-octadecenoate + H(+). The enzyme catalyses (S,S)-2-(9Z-octadecenoyl)-sn-glycero-1-phospho-(2'-(9Z-octadecenoyl)-1'-sn-glycerol) + H2O = (S,S)-2-(9Z-octadecenoyl)-sn-glycero-1-phospho-(1'-sn-glycerol) + (9Z)-octadecenoate + H(+). It carries out the reaction (R,R)-2-(9Z-octadecenoyl)-sn-glycero-3-phospho-(2'-(9Z-octadecenoyl)-3'-sn-glycerol) + H2O = (R,R)-2-(9Z-octadecenoyl)-sn-glycero-3-phospho-(3'-sn-glycerol) + (9Z)-octadecenoate + H(+). Its function is as follows. Lipase that preferentially hydrolysis medium-chain saturated monoacylglycerols including 2-arachidonoylglycerol. Through 2-arachidonoylglycerol degradation may regulate endocannabinoid signaling pathways. Also has a lysophosphatidyl lipase activity with a preference for lysophosphatidylglycerol among other lysophospholipids. Also able to degrade bis(monoacylglycero)phosphate (BMP) and constitutes the major enzyme for BMP catabolism. BMP, also known as lysobisphosphatidic acid, is enriched in late endosomes and lysosomes and plays a key role in the formation of intraluminal vesicles and in lipid sorting. The sequence is that of Monoacylglycerol lipase ABHD6 from Bos taurus (Bovine).